Reading from the N-terminus, the 511-residue chain is Inositol-3-phosphate synthase (511 aa).

24 residues coordinate NAD(+): Gly-70, Asn-71, Asn-72, Asp-143, Ser-179, Ile-180, Gln-190, Arg-193, Ser-230, Ala-231, Asn-232, Thr-233, Gly-281, Ser-282, Asp-306, Thr-309, Asn-340, Asn-341, Asp-342, Lys-355, Gly-393, Asp-394, Asp-422, and Ser-423.

This sequence belongs to the myo-inositol 1-phosphate synthase family. The cofactor is NAD(+).

The protein resides in the cytoplasm. It catalyses the reaction D-glucose 6-phosphate = 1D-myo-inositol 3-phosphate. It functions in the pathway polyol metabolism; myo-inositol biosynthesis; myo-inositol from D-glucose 6-phosphate: step 1/2. Functionally, key enzyme in myo-inositol biosynthesis pathway that catalyzes the conversion of glucose 6-phosphate to 1-myo-inositol 1-phosphate in a NAD-dependent manner. Rate-limiting enzyme in the synthesis of all inositol-containing compounds. This is Inositol-3-phosphate synthase (ino1) from Dictyostelium discoideum (Social amoeba).